A 66-amino-acid polypeptide reads, in one-letter code: Cell division protein ZapB (66 aa).

Residues 3-59 are a coiled coil; sequence LELLSQLETKIQATLENIELLKMELEEEKQKSTQLAEKNQKLQQDLNSWSDKVNGLV.

Belongs to the ZapB family. As to quaternary structure, homodimer. The ends of the coiled-coil dimer bind to each other, forming polymers. Interacts with FtsZ.

It is found in the cytoplasm. Functionally, non-essential, abundant cell division factor that is required for proper Z-ring formation. It is recruited early to the divisome by direct interaction with FtsZ, stimulating Z-ring assembly and thereby promoting cell division earlier in the cell cycle. Its recruitment to the Z-ring requires functional FtsA or ZipA. The sequence is that of Cell division protein ZapB from Shewanella denitrificans (strain OS217 / ATCC BAA-1090 / DSM 15013).